The following is a 134-amino-acid chain: Pre-histone-like nucleoprotein (134 aa).

A propeptide spanning residues 2 to 23 is cleaved from the precursor; sequence AILISPTNNTGWGLGTHKLFGG. A disordered region spans residues 40-62; it reads RASWGSKGRRRRQGRARGAPLDP. Positions 125–134 match the Nuclear localization signal motif; sequence KRKRRVRFRQ.

Belongs to the adenoviridae histone-like nucleoprotein family. Interacts with the core-capsid bridging protein; this interaction bridges the virus core to the capsid. Interacts with host NPM1; this interaction might play a role in placing the pre-histone-like nucleoprotein on the viral DNA or regulating viral gene expression. Interacts with host HMGB1; this interaction inhibits host immune response. Cleaved near the N-terminus by the viral protease during virion maturation to form the mature protein.

The protein localises to the virion. It localises to the host nucleus. It is found in the host nucleolus. Plays a role in the inhibition of host immune response within the nucleus. Interacts with cellular nucleosomes and immobilizes the host immune danger signal HMGB1 on chromatin. In turn, prevents HMGB1 release out of the cell and thus decreases inflammation. Also plays a role in the wrapping and condensation of the viral DNA. May also promote viral genome import into the nucleus. In Canis lupus familiaris (Dog), this protein is Pre-histone-like nucleoprotein.